Consider the following 513-residue polypeptide: Bifunctional purine biosynthesis protein PurH (513 aa).

An MGS-like domain is found at 1–145; the sequence is MTKRALISVS…KNYQDVTAVV (145 aa).

This sequence belongs to the PurH family.

It carries out the reaction (6R)-10-formyltetrahydrofolate + 5-amino-1-(5-phospho-beta-D-ribosyl)imidazole-4-carboxamide = 5-formamido-1-(5-phospho-D-ribosyl)imidazole-4-carboxamide + (6S)-5,6,7,8-tetrahydrofolate. The enzyme catalyses IMP + H2O = 5-formamido-1-(5-phospho-D-ribosyl)imidazole-4-carboxamide. The protein operates within purine metabolism; IMP biosynthesis via de novo pathway; 5-formamido-1-(5-phospho-D-ribosyl)imidazole-4-carboxamide from 5-amino-1-(5-phospho-D-ribosyl)imidazole-4-carboxamide (10-formyl THF route): step 1/1. It participates in purine metabolism; IMP biosynthesis via de novo pathway; IMP from 5-formamido-1-(5-phospho-D-ribosyl)imidazole-4-carboxamide: step 1/1. In Enterococcus faecalis (strain ATCC 700802 / V583), this protein is Bifunctional purine biosynthesis protein PurH.